The chain runs to 832 residues: DEAD-box ATP-dependent RNA helicase 13 (832 aa).

The span at 1–12 shows a compositional bias: pro residues; the sequence is MAAAPPPPPPPQ. Disordered regions lie at residues 1 to 59 and 91 to 173; these read MAAA…TMVE and VEDL…DDNV. Positions 29 to 42 are enriched in basic residues; that stretch reads RKGKKSRGAKKPRR. Low complexity predominate over residues 43–55; it reads AAAAAAASTSSAG. Basic residues predominate over residues 105-114; it reads QKKKKRKKRK. Residues 128–137 show a composition bias toward acidic residues; it reads LVVECEEEGE. Residues 141–155 show a composition bias toward basic residues; sequence KRVKKKRRSRKKRKV. Positions 156–167 are enriched in basic and acidic residues; that stretch reads KEMEEKMESKED. A Q motif motif is present at residues 198-226; the sequence is YAWRELRLHPLLITAVRRLGFKEPTPIQK. A Helicase ATP-binding domain is found at 230-447; sequence PAAAHQGKDV…KLKRGLVTAK (218 aa). 243–250 contributes to the ATP binding site; it reads AETGSGKT. A DEAD box motif is present at residues 371–374; sequence DEAD. Positions 484 to 645 constitute a Helicase C-terminal domain; sequence KLEESFIECS…QFPVDHAYMP (162 aa). A disordered region spans residues 800 to 832; that stretch reads RRLAENWRRKKQKEKKSTREQKRKEKRIAKERD. Residues 814-832 are compositionally biased toward basic and acidic residues; the sequence is KKSTREQKRKEKRIAKERD.

Belongs to the DEAD box helicase family. DDX24/MAK5 subfamily.

It catalyses the reaction ATP + H2O = ADP + phosphate + H(+). This chain is DEAD-box ATP-dependent RNA helicase 13, found in Oryza sativa subsp. japonica (Rice).